We begin with the raw amino-acid sequence, 257 residues long: Flap endonuclease Xni (257 aa).

Residue D109 coordinates Mg(2+). Positions 165–254 (VKPEQLADYW…GFNLQDIRYE (90 aa)) constitute a 5'-3' exonuclease domain. Residues L176, P185, I187, and I190 each contribute to the K(+) site. The segment at 189 to 194 (GIGPKA) is interaction with DNA.

The protein belongs to the Xni family. Requires Mg(2+) as cofactor. K(+) is required as a cofactor.

Has flap endonuclease activity. During DNA replication, flap endonucleases cleave the 5'-overhanging flap structure that is generated by displacement synthesis when DNA polymerase encounters the 5'-end of a downstream Okazaki fragment. In Vibrio atlanticus (strain LGP32) (Vibrio splendidus (strain Mel32)), this protein is Flap endonuclease Xni.